We begin with the raw amino-acid sequence, 122 residues long: Large ribosomal subunit protein uL14 (122 aa).

Belongs to the universal ribosomal protein uL14 family. As to quaternary structure, part of the 50S ribosomal subunit. Forms a cluster with proteins L3 and L19. In the 70S ribosome, L14 and L19 interact and together make contacts with the 16S rRNA in bridges B5 and B8.

Functionally, binds to 23S rRNA. Forms part of two intersubunit bridges in the 70S ribosome. This Elusimicrobium minutum (strain Pei191) protein is Large ribosomal subunit protein uL14.